The chain runs to 309 residues: MGINSDVSRPRARSTPNMSKKFQTIGLIGKPHHQGTNQTIEKLHLWLTAQGYTVLVEERVSAELEIEFQAVDLVEIGERCDLAIVVGGDGNMLGAARVLARYDVAVIGVNRGNLGFLTDLPPDGFETQLAQVLGGEFETEHRFLLEAEVHRHGMIKASNTAVNEAVLHPGKIAHMIQFEVYIDEQFMYSQRADGMIVSTPTGSTAYSLSAGGAILTPNLQALILVPMFPHTLSCRPIVVDACSTIKLVVSPDNGENLEVSCDGHVHLSVLPGDEIIIRRSQQRLMLIHPKGHNYFHVLRNKLGWGSKLF.

The Proton acceptor role is filled by D89. Residues 89–90 (DG), 163–164 (NE), H174, R191, D193, and 204–209 (TAYSLS) each bind NAD(+).

The protein belongs to the NAD kinase family. It depends on a divalent metal cation as a cofactor.

Its subcellular location is the cytoplasm. The enzyme catalyses NAD(+) + ATP = ADP + NADP(+) + H(+). In terms of biological role, involved in the regulation of the intracellular balance of NAD and NADP, and is a key enzyme in the biosynthesis of NADP. Catalyzes specifically the phosphorylation on 2'-hydroxyl of the adenosine moiety of NAD to yield NADP. The protein is NAD kinase of Shewanella denitrificans (strain OS217 / ATCC BAA-1090 / DSM 15013).